The sequence spans 249 residues: Probable septum site-determining protein MinC (249 aa).

Residues 116–149 (AAVSPPPPPPPPPARAEPAAPVARPAPGRMQRNA) form a disordered region. Positions 119 to 130 (SPPPPPPPPPAR) are enriched in pro residues. The span at 131–142 (AEPAAPVARPAP) shows a compositional bias: low complexity.

The protein belongs to the MinC family. Interacts with MinD and FtsZ.

Cell division inhibitor that blocks the formation of polar Z ring septums. Rapidly oscillates between the poles of the cell to destabilize FtsZ filaments that have formed before they mature into polar Z rings. Prevents FtsZ polymerization. This is Probable septum site-determining protein MinC from Xanthomonas campestris pv. campestris (strain ATCC 33913 / DSM 3586 / NCPPB 528 / LMG 568 / P 25).